Reading from the N-terminus, the 164-residue chain is Zinc finger A20 and AN1 domain-containing stress-associated protein 1 (164 aa).

Residues 16-50 (APEITLCANSCGFPGNPATQNLCQNCFLAATASTS) form an A20-type zinc finger. Positions 22, 26, 38, and 41 each coordinate Zn(2+). A compositionally biased stretch (low complexity) spans 48–58 (STSSPSSLSSP). The segment at 48 to 81 (STSSPSSLSSPVLDKQPPRPAAPLVEPQAPLPPP) is disordered. Residues 99-145 (TSAVNRCSRCRKRVGLTGFRCRCGHLFCGEHRYSDRHGCSYDYKSAA) form an AN1-type zinc finger. Positions 105, 108, 119, 121, 126, 129, 135, and 137 each coordinate Zn(2+).

In terms of biological role, may be involved in environmental stress response. The polypeptide is Zinc finger A20 and AN1 domain-containing stress-associated protein 1 (SAP1) (Oryza sativa subsp. indica (Rice)).